The chain runs to 468 residues: 6-phospho-beta-galactosidase (468 aa).

D-galactose 6-phosphate contacts are provided by glutamine 19, histidine 116, asparagine 159, glutamate 160, and asparagine 297. Glutamate 160 acts as the Proton donor in catalysis. The active-site Nucleophile is glutamate 375. 4 residues coordinate D-galactose 6-phosphate: serine 428, tryptophan 429, lysine 435, and tyrosine 437.

This sequence belongs to the glycosyl hydrolase 1 family.

The enzyme catalyses a 6-phospho-beta-D-galactoside + H2O = D-galactose 6-phosphate + an alcohol. The protein operates within carbohydrate metabolism; lactose degradation; D-galactose 6-phosphate and beta-D-glucose from lactose 6-phosphate: step 1/1. The chain is 6-phospho-beta-galactosidase from Streptococcus pyogenes serotype M6 (strain ATCC BAA-946 / MGAS10394).